A 496-amino-acid polypeptide reads, in one-letter code: Cytochrome P450 71D180 (496 aa).

Residues 1–21 form a helical; Signal-anchor for type II membrane protein membrane-spanning segment; the sequence is MDISISWVVIIVFVLSYLILM. Heme is bound at residue C435.

Belongs to the cytochrome P450 family. It depends on heme as a cofactor. In terms of tissue distribution, mostly expressed in flowers and, to a lower extent, in leaves, especially in glandular trichomes.

It localises to the membrane. It catalyses the reaction (4R)-limonene + reduced [NADPH--hemoprotein reductase] + O2 = (1R,5S)-carveol + oxidized [NADPH--hemoprotein reductase] + H2O + H(+). The catalysed reaction is (4S)-limonene + reduced [NADPH--hemoprotein reductase] + O2 = (1S,5R)-carveol + oxidized [NADPH--hemoprotein reductase] + H2O + H(+). It carries out the reaction gamma-terpinene + 2 reduced [NADPH--hemoprotein reductase] + 2 O2 = carvacrol + 2 oxidized [NADPH--hemoprotein reductase] + 3 H2O + 2 H(+). It participates in secondary metabolite biosynthesis; terpenoid biosynthesis. Functionally, involved in the biosynthesis of phenolic monoterpenes natural products thymol and carvacrol which have a broad range of biological activities acting as antimicrobial compounds, insecticides, antioxidants and pharmaceutical agents. Catalyzes the C2-hydroxylation of gamma-terpinene to produce carvacrol. Mediates also the C6-hydroxylation of (4S)-limonene and (4R)-limonene to form carveol. This is Cytochrome P450 71D180 from Thymus vulgaris (Thyme).